Consider the following 575-residue polypeptide: MEEAINNVLLLLREDSISLETVLWETHYVLLNLHNEQNLRLVVAQLIACGRIWDYWNEHRSEYFAFWVELISRKKVTNNGLPFSSFVKSIVGILEVDASNEILCFRRICLLCVFYKLLSCDHIVNLQYPLKRAVSKALSKQIKTHQFSGFEANFLLQQLFASVDSSASDISFDAFSLLPHLLKWEEIVWSGFINYLDTEHKRDSLPTAVLCHLLLRLSTYQQISIIKRLITLIDKAIPSWKSRSSDSKYNDHQFVKKNFFSIIMVLESLAKSQYRKSNVLAADRSLCEYIILTLFHMEYLFSFVASSWSTLDFVITTCLSRVAQPAKFISETVREAIIDSIQLEGYVDLQKLSGSPVLVTLSFINNWQNLICRRLEKQTVNEKVITLSSTAKEISSLGLSFAEKLISQSDESTLCKHYVYASLYACLFCNLNEGSPKDYLDNDIYVHARCLFLLTKTLNLDSLKSILCSRVRLYYNIEIAYYFTDVLLKWFQPIIRYEFDNALIFYKASISLVSVLAPAAQKQFLSNYLNSIQGFSTETKEDLIFLVSSQIRQMPYQNATSLLSFWLSIVVGRAV.

The protein localises to the cytoplasm. Its subcellular location is the cytoskeleton. The protein resides in the microtubule organizing center. It localises to the spindle pole body. This is an uncharacterized protein from Schizosaccharomyces pombe (strain 972 / ATCC 24843) (Fission yeast).